Reading from the N-terminus, the 299-residue chain is Nucleophosmin (299 aa).

Acidic residues predominate over residues E125–H134. Residues E125–E247 are disordered. A Nuclear localization signal motif is present at residues P153–R158. Residues E160–E187 show a composition bias toward acidic residues. Over residues T188–K197 the composition is skewed to basic and acidic residues. The Nuclear localization signal motif lies at P189–S195. Repeats lie at residues K218 to P220, K221 to P223, K237 to P239, and K240 to P242. The segment at K218 to P242 is 4 X 3 AA repeats of K-T-P. Basic and acidic residues predominate over residues K221–T231. Residues K232–P242 show a composition bias toward low complexity.

This sequence belongs to the nucleoplasmin family. Decamer formed by two pentameric rings associated in a head-to-head fashion. Phosphorylated.

Its subcellular location is the cytoplasm. The protein resides in the nucleus. It localises to the nucleoplasm. It is found in the nucleolus. Its function is as follows. Acts as a chaperonin for the core histones H3, H2B and H4. Associated with nucleolar ribonucleoprotein structures and bind single-stranded nucleic acids. It may function in the assembly and/or transport of ribosome. May stimulate endonuclease activity on apurinic/apyrimidinic (AP) double-stranded DNA. May inhibit endonuclease activity on AP single-stranded RNA. The polypeptide is Nucleophosmin (npm1) (Xenopus laevis (African clawed frog)).